Consider the following 273-residue polypeptide: Large ribosomal subunit protein uL29m (273 aa).

Residues 247–258 (PLRHDRWEKGQE) are compositionally biased toward basic and acidic residues. Residues 247–273 (PLRHDRWEKGQEENSGGETEDGNAPSN) are disordered.

It belongs to the universal ribosomal protein uL29 family. In terms of assembly, component of the mitochondrial large ribosomal subunit. Mature mitochondrial ribosomes consist of a small (37S) and a large (54S) subunit. The 37S subunit contains at least 33 different proteins and 1 molecule of RNA (15S). The 54S subunit contains at least 45 different proteins and 1 molecule of RNA (21S).

The protein localises to the mitochondrion. The chain is Large ribosomal subunit protein uL29m (mrpl4) from Aspergillus niger (strain ATCC MYA-4892 / CBS 513.88 / FGSC A1513).